The chain runs to 973 residues: E3 ubiquitin-protein ligase BRE1A (973 aa).

The disordered stretch occupies residues 1-37; that stretch reads MSGIGNKRAAGEPGTSMPPEKKTAVEDSGTTVETIKL. Lysine 21 is subject to N6-acetyllysine. Serine 41 carries the phosphoserine modification. Residues 43-90 adopt a coiled-coil conformation; the sequence is TEELDIRTLQSKNRKLAEMLDQRQAIEDELREHIEKLERRQATDDASL. Residues 128–153 form a disordered region; sequence VVPEPEPDSDSNQERKDDRERGDGQE. A phosphoserine mark is found at serine 136 and serine 138. Residues 139–151 are compositionally biased toward basic and acidic residues; it reads NQERKDDRERGDG. Coiled-coil stretches lie at residues 168–378 and 429–896; these read EEME…VKET and SLHK…TTKK. Residues lysine 348 and lysine 510 each carry the N6-acetyllysine modification. A disordered region spans residues 507–620; it reads DLNKTRLRSG…GKHDDGRKKE (114 aa). At serine 522 the chain carries Phosphoserine. Basic and acidic residues-rich tracts occupy residues 527-544 and 553-620; these read EDPKDEPTELKQDSEDLA and SQED…RKKE. Serine 560 bears the Phosphoserine mark. The segment at 920 to 959 adopts an RING-type zinc-finger fold; sequence CPCCNMRKKDAVLTKCFHVFCFECVKTRYDTRQRKCPKCN.

It belongs to the BRE1 family. As to quaternary structure, component of the RNF20/40 complex (also known as BRE1 complex) probably composed of 2 copies of RNF20/BRE1A and 2 copies of RNF40/BRE1B. Interacts with UBE2E1/UBCH6. Interacts with p53/TP53 and WAC. Interacts with PAF1; the interaction mediates the association of the PAF1 and RNF20/40 complexes which is a prerequsite for recruitment of UBE2A/B. Interacts with PA2G4. Interacts with FBXL19.

The protein resides in the nucleus. It catalyses the reaction S-ubiquitinyl-[E2 ubiquitin-conjugating enzyme]-L-cysteine + [acceptor protein]-L-lysine = [E2 ubiquitin-conjugating enzyme]-L-cysteine + N(6)-ubiquitinyl-[acceptor protein]-L-lysine.. It participates in protein modification; protein ubiquitination. Component of the RNF20/40 E3 ubiquitin-protein ligase complex that mediates monoubiquitination of 'Lys-120' of histone H2B (H2BK120ub1). H2BK120ub1 gives a specific tag for epigenetic transcriptional activation and is also prerequisite for histone H3 'Lys-4' and 'Lys-79' methylation (H3K4me and H3K79me, respectively). It thereby plays a central role in histone code and gene regulation. The RNF20/40 complex forms a H2B ubiquitin ligase complex in cooperation with the E2 enzyme UBE2A or UBE2B; reports about the cooperation with UBE2E1/UBCH are contradictory. Required for transcriptional activation of Hox genes. Recruited to the MDM2 promoter, probably by being recruited by p53/TP53, and thereby acts as a transcriptional coactivator. Mediates the polyubiquitination of PA2G4 leading to its proteasome-mediated degradation. In Mus musculus (Mouse), this protein is E3 ubiquitin-protein ligase BRE1A (Rnf20).